Consider the following 591-residue polypeptide: Calnexin (591 aa).

Positions 1–20 are cleaved as a signal peptide; the sequence is MEGKWLLCLLLVLGTAAVEA. Over 21–482 the chain is Lumenal; that stretch reads HDGHDDDAID…QMLEAAEERP (462 aa). The Ca(2+) site is built by Ser75 and Asp118. At Lys138 the chain carries N6-acetyllysine. Residues Cys161 and Cys195 are joined by a disulfide bond. Residues Tyr165, Lys167, Tyr186, and Asp193 each coordinate an alpha-D-glucoside. The segment at 261–347 is disordered; sequence GNLLNDMTPP…EKPEDWDEDM (87 aa). Residues 275–320 show a composition bias toward basic and acidic residues; the sequence is REIEDPEDRKPEDWDERPKIADPDAVKPDDWDEDAPSKIPDEEATK. Residues 277 to 410 are p domain (Extended arm); it reads IEDPEDRKPE…RKIPNPDFFE (134 aa). A run of 5 repeats spans residues 279–291, 296–308, 315–327, 334–346, and 349–359. 2 4 X approximate repeats regions span residues 279-346 and 349-406; these read DPED…WDED and GEWE…IPNP. A compositionally biased stretch (acidic residues) spans 324-347; sequence WLDDEPEYIPDPDAEKPEDWDEDM. Positions 327–360 are interaction with PPIB; that stretch reads DEPEYIPDPDAEKPEDWDEDMDGEWEAPQIANPK. Cys361 and Cys367 are joined by a disulfide. Repeat copies occupy residues 368–378, 382–392, and 396–406. Glu426 is an an alpha-D-glucoside binding site. Asp437 is a binding site for Ca(2+). A helical transmembrane segment spans residues 483–503; it reads WLWVVYILTVALPVFLVILFC. 2 S-palmitoyl cysteine lipidation sites follow: Cys503 and Cys504. Over 504 to 591 the chain is Cytoplasmic; that stretch reads CSGKKQSNAM…SPRNRKPRRE (88 aa). Residues 504–591 are sufficient to mediate interaction with SGIP1; sequence CSGKKQSNAM…SPRNRKPRRE (88 aa). Positions 514-539 are enriched in basic and acidic residues; the sequence is EYKKTDAPQPDVKDEEGKEEEKNKRD. The segment at 514–591 is disordered; the sequence is EYKKTDAPQP…SPRNRKPRRE (78 aa). At Ser553 the chain carries Phosphoserine. Acidic residues predominate over residues 555-568; that stretch reads AEEDGVTGSQDEED. Thr561 is modified (phosphothreonine). Ser563 is subject to Phosphoserine; by MAPK3. Ser582 bears the Phosphoserine mark.

The protein belongs to the calreticulin family. As to quaternary structure, interacts with MAPK3/ERK1. Interacts with KCNH2. Associates with ribosomes. The palmitoylated form interacts with the ribosome-translocon complex component SSR1, promoting efficient folding of glycoproteins. Interacts with SERPINA2P/SERPINA2 and with the S and Z variants of SERPINA1. Interacts with SGIP1; involved in negative regulation of endocytosis. Interacts with PPIB. Interacts with SMIM22. Interacts with TMX2. Interacts with TMEM35A/NACHO. Interacts with CHRNA7. Interacts with reticulophagy regulators RETREG2 and RETREG3. Interacts with DNM1L; may form part of a larger protein complex at the ER-mitochondrial interface during mitochondrial fission. Interacts with ADAM7. Post-translationally, phosphorylated at Ser-563 by MAPK3/ERK1. Phosphorylation by MAPK3/ERK1 increases its association with ribosomes. In terms of processing, palmitoylation by DHHC6 leads to the preferential localization to the perinuclear rough ER. It mediates the association of calnexin with the ribosome-translocon complex (RTC) which is required for efficient folding of glycosylated proteins. Ubiquitinated, leading to proteasomal degradation. Probably ubiquitinated by ZNRF4. As to expression, expressed in sperm (at protein level).

It is found in the endoplasmic reticulum membrane. The protein localises to the mitochondrion membrane. It localises to the melanosome membrane. In terms of biological role, calcium-binding protein that interacts with newly synthesized monoglucosylated glycoproteins in the endoplasmic reticulum. It may act in assisting protein assembly and/or in the retention within the ER of unassembled protein subunits. It seems to play a major role in the quality control apparatus of the ER by the retention of incorrectly folded proteins. Associated with partial T-cell antigen receptor complexes that escape the ER of immature thymocytes, it may function as a signaling complex regulating thymocyte maturation. Additionally it may play a role in receptor-mediated endocytosis at the synapse. This is Calnexin (Canx) from Mus musculus (Mouse).